Here is a 115-residue protein sequence, read N- to C-terminus: Nucleoid-associated protein Rpic_1036 (115 aa).

Belongs to the YbaB/EbfC family. Homodimer.

It localises to the cytoplasm. The protein resides in the nucleoid. Functionally, binds to DNA and alters its conformation. May be involved in regulation of gene expression, nucleoid organization and DNA protection. In Ralstonia pickettii (strain 12J), this protein is Nucleoid-associated protein Rpic_1036.